The sequence spans 178 residues: Caveolin-1 (178 aa).

N-acetylserine is present on Ser2. Ser2 carries the phosphoserine modification. The tract at residues 2–94 (SGGKYVDSEG…WKASFTTFTV (93 aa)) is required for homooligomerization. The Cytoplasmic portion of the chain corresponds to 2–104 (SGGKYVDSEG…TKYWFYRLLS (103 aa)). The residue at position 5 (Lys5) is an N6-acetyllysine; alternate. Residue Lys5 forms a Glycyl lysine isopeptide (Lys-Gly) (interchain with G-Cter in ubiquitin); alternate linkage. Tyr6 bears the Phosphotyrosine mark. Position 9 is a phosphoserine (Ser9). Tyr14 is modified (phosphotyrosine; by ABL1). Tyr25 carries the post-translational modification Phosphotyrosine. Glycyl lysine isopeptide (Lys-Gly) (interchain with G-Cter in ubiquitin) cross-links involve residues Lys26, Lys30, Lys39, Lys47, and Lys57. The segment at 82–94 (DGIWKASFTTFTV) is interaction with CAVIN3. The segment at residues 105–125 (ALFGIPMALIWGIYFAILSFL) is an intramembrane region (helical). Residues 126–178 (HIWAVVPCIKSFLIEIQCISRVYSIYVHTFCDPLFEAIGKIFSNIRINMQKEI) are Cytoplasmic-facing. The interacts with SPRY1, SPRY2, SPRY3 and SPRY4 stretch occupies residues 131-142 (VPCIKSFLIEIQ). 3 S-palmitoyl cysteine lipidation sites follow: Cys133, Cys143, and Cys156. Residues 149-160 (SIYVHTFCDPLF) are interacts with SPRY1, SPRY2, and SPRY4. Residues 167-178 (FSNIRINMQKEI) are interacts with SPRY1, SPRY2, SPRY3 and SPRY4.

The protein belongs to the caveolin family. In terms of assembly, homooligomer. Interacts with GLIPR2. Interacts with NOSTRIN. Interacts with SNAP25 and STX1A. Interacts (via the N-terminus) with DPP4; the interaction is direct. Interacts with CTNNB1, CDH1 and JUP. Interacts with PACSIN2; this interaction induces membrane tubulation. Interacts with SLC7A9. Interacts with BMX and BTK. Interacts with TGFBR1. Interacts with CAVIN3 (via leucine-zipper domain) in a cholesterol-sensitive manner. Interacts with CAVIN1. Interacts with EHD2 in a cholesterol-dependent manner. Forms a ternary complex with UBXN6 and VCP; mediates CAV1 targeting to lysosomes for degradation. Interacts with ABCG1; this interaction regulates ABCG1-mediated cholesterol efflux. Interacts with NEU3; this interaction enhances NEU3 sialidase activity within caveola. Interacts (via C-terminus) with SPRY1, SPRY2 (via C-terminus), SPRY3, and SPRY4. Interacts with IGFBP5; this interaction allows trafficking of IGFBP5 from the plasma membrane to the nucleus. In terms of processing, phosphorylated at Tyr-14 by ABL1 in response to oxidative stress. Ubiquitinated. Undergo monoubiquitination and multi- and/or polyubiquitination. Monoubiquitination of N-terminal lysines promotes integration in a ternary complex with UBXN6 and VCP which promotes oligomeric CAV1 targeting to lysosomes for degradation. Ubiquitinated by ZNRF1; leading to degradation and modulation of the TLR4-mediated immune response.

The protein resides in the golgi apparatus membrane. It is found in the cell membrane. Its subcellular location is the membrane. The protein localises to the caveola. It localises to the membrane raft. Functionally, may act as a scaffolding protein within caveolar membranes. Forms a stable heterooligomeric complex with CAV2 that targets to lipid rafts and drives caveolae formation. Mediates the recruitment of CAVIN proteins (CAVIN1/2/3/4) to the caveolae. Interacts directly with G-protein alpha subunits and can functionally regulate their activity. Involved in the costimulatory signal essential for T-cell receptor (TCR)-mediated T-cell activation. Its binding to DPP4 induces T-cell proliferation and NF-kappa-B activation in a T-cell receptor/CD3-dependent manner. Recruits CTNNB1 to caveolar membranes and may regulate CTNNB1-mediated signaling through the Wnt pathway. Negatively regulates TGFB1-mediated activation of SMAD2/3 by mediating the internalization of TGFBR1 from membrane rafts leading to its subsequent degradation. Binds 20(S)-hydroxycholesterol (20(S)-OHC). This chain is Caveolin-1 (CAV1), found in Muntiacus reevesi (Reeves' muntjac).